We begin with the raw amino-acid sequence, 355 residues long: Guanine nucleotide-binding protein G(q) subunit alpha (355 aa).

The S-palmitoyl cysteine moiety is linked to residue Cys-3. One can recognise a G-alpha domain in the interval 32 to 355 (KEIKLLLLGT…QHITEVVPGL (324 aa)). The interval 35–48 (KLLLLGTGESGKST) is G1 motif. Residues 40-47 (GTGESGKS), 174-180 (LRVRVPT), 199-203 (DVGGQ), 269-272 (NKKD), and Ala-326 each bind GTP. Mg(2+) is bound by residues Ser-47 and Thr-180. The segment at 172–180 (DVLRVRVPT) is G2 motif. The G3 motif stretch occupies residues 195–204 (FKMVDVGGQR). The tract at residues 265–272 (ILFLNKKD) is G4 motif. The interval 324–329 (TCATDT) is G5 motif.

Belongs to the G-alpha family. G(q) subfamily. In terms of assembly, g proteins are composed of 3 units; alpha, beta and gamma. The alpha chain contains the guanine nucleotide binding site.

In terms of biological role, guanine nucleotide-binding proteins (G proteins) are involved as modulators or transducers in various transmembrane signaling systems. The sequence is that of Guanine nucleotide-binding protein G(q) subunit alpha from Geodia cydonium (Sponge).